The primary structure comprises 181 residues: Inner membrane-spanning protein YciB (181 aa).

Helical transmembrane passes span 22–42, 50–70, 72–92, 118–138, and 148–168; these read IYTA…ILYF, MHLV…AFHD, AFIK…LAVS, VTWY…YVAF, and FKVF…VFYI.

Belongs to the YciB family.

The protein localises to the cell inner membrane. Functionally, plays a role in cell envelope biogenesis, maintenance of cell envelope integrity and membrane homeostasis. In Shewanella denitrificans (strain OS217 / ATCC BAA-1090 / DSM 15013), this protein is Inner membrane-spanning protein YciB.